Here is a 49-residue protein sequence, read N- to C-terminus: Unknown protein from spot 75 of 2D-PAGE of etiolated coleoptile (49 aa).

This chain is Unknown protein from spot 75 of 2D-PAGE of etiolated coleoptile, found in Zea mays (Maize).